The sequence spans 279 residues: Thymidylate synthase 1 (279 aa).

141 to 142 (RR) is a binding site for dUMP. The active-site Nucleophile is the cysteine 161. DUMP-binding positions include 181–184 (RSND), asparagine 192, and 222–224 (HVY). Aspartate 184 contributes to the (6R)-5,10-methylene-5,6,7,8-tetrahydrofolate binding site. Residue alanine 278 coordinates (6R)-5,10-methylene-5,6,7,8-tetrahydrofolate.

It belongs to the thymidylate synthase family. Bacterial-type ThyA subfamily. In terms of assembly, homodimer.

The protein resides in the cytoplasm. It catalyses the reaction dUMP + (6R)-5,10-methylene-5,6,7,8-tetrahydrofolate = 7,8-dihydrofolate + dTMP. It functions in the pathway pyrimidine metabolism; dTTP biosynthesis. In terms of biological role, catalyzes the reductive methylation of 2'-deoxyuridine-5'-monophosphate (dUMP) to 2'-deoxythymidine-5'-monophosphate (dTMP) while utilizing 5,10-methylenetetrahydrofolate (mTHF) as the methyl donor and reductant in the reaction, yielding dihydrofolate (DHF) as a by-product. This enzymatic reaction provides an intracellular de novo source of dTMP, an essential precursor for DNA biosynthesis. The sequence is that of Thymidylate synthase 1 from Bacillus subtilis (strain 168).